The sequence spans 412 residues: MADNKRIVLAYSGGLDTSVAISYLKERTGKDVVAVSLDVGQGGESLETIKQRALACGAVESYVVDARDEFANEYCMKALKANAMYEGVYPLVSAISRPLISKHLVRAAHQFGADTISHGCTGKGNDQVRFEVSIASIDPTLKAISPIRDLSLTRDVEIAFAKEHKLPITQTEKSPYSIDQNVWGRAIETGFLEDPWNGPTKDCYSYTDDPAFPPVEDEVVIEFKEGVPVKIDGRDVTPLQAIEEMNRRAGAQGVGRIDLIEDRLVGIKSRELYEAPGAVALITAHQELENCCLEREQHRIKRDIDKRWGELVYDAQWFSPATQSLNAFIEDTQKYVSGEIRMVLHGGRAVVTGRRSDSSLYDYKLATYDSGDTFDQKSSNGFIDIYGLPSRVAAARDVKFGNGIEVPENTVE.

Residue 10–18 (AYSGGLDTS) participates in ATP binding. L-citrulline is bound at residue tyrosine 89. Residue glycine 119 participates in ATP binding. L-aspartate is bound by residues threonine 121, asparagine 125, and aspartate 126. Asparagine 125 contributes to the L-citrulline binding site. The L-citrulline site is built by arginine 129, serine 177, glutamate 261, and tyrosine 273.

Belongs to the argininosuccinate synthase family. Type 1 subfamily. As to quaternary structure, homotetramer.

It localises to the cytoplasm. It carries out the reaction L-citrulline + L-aspartate + ATP = 2-(N(omega)-L-arginino)succinate + AMP + diphosphate + H(+). It participates in amino-acid biosynthesis; L-arginine biosynthesis; L-arginine from L-ornithine and carbamoyl phosphate: step 2/3. The protein is Argininosuccinate synthase of Bifidobacterium longum (strain DJO10A).